We begin with the raw amino-acid sequence, 258 residues long: Trans-aconitate 2-methyltransferase (258 aa).

This sequence belongs to the methyltransferase superfamily. Tam family.

It localises to the cytoplasm. It carries out the reaction trans-aconitate + S-adenosyl-L-methionine = (E)-3-(methoxycarbonyl)pent-2-enedioate + S-adenosyl-L-homocysteine. Catalyzes the S-adenosylmethionine monomethyl esterification of trans-aconitate. This is Trans-aconitate 2-methyltransferase from Deinococcus radiodurans (strain ATCC 13939 / DSM 20539 / JCM 16871 / CCUG 27074 / LMG 4051 / NBRC 15346 / NCIMB 9279 / VKM B-1422 / R1).